Reading from the N-terminus, the 495-residue chain is Probable cytosol aminopeptidase (495 aa).

Residues K266 and D271 each coordinate Mn(2+). Residue K278 is part of the active site. Positions 289, 348, and 350 each coordinate Mn(2+). Residue R352 is part of the active site.

Belongs to the peptidase M17 family. Requires Mn(2+) as cofactor.

Its subcellular location is the cytoplasm. The enzyme catalyses Release of an N-terminal amino acid, Xaa-|-Yaa-, in which Xaa is preferably Leu, but may be other amino acids including Pro although not Arg or Lys, and Yaa may be Pro. Amino acid amides and methyl esters are also readily hydrolyzed, but rates on arylamides are exceedingly low.. It catalyses the reaction Release of an N-terminal amino acid, preferentially leucine, but not glutamic or aspartic acids.. In terms of biological role, presumably involved in the processing and regular turnover of intracellular proteins. Catalyzes the removal of unsubstituted N-terminal amino acids from various peptides. The sequence is that of Probable cytosol aminopeptidase from Pseudomonas aeruginosa (strain UCBPP-PA14).